Reading from the N-terminus, the 264-residue chain is ATP synthase subunit a (264 aa).

5 consecutive transmembrane segments (helical) span residues 39–59 (LDTLIISVVLGALFILIFYIV), 97–117 (VAPLALTIFIWVFLMNFMDLV), 139–159 (TADPTLTFAMSITVFVLVIFY), 205–225 (LFGNLFAGELIFILIALLPWW), and 239–259 (LLVITVQAFIFMMLTVVYISL).

Belongs to the ATPase A chain family. As to quaternary structure, F-type ATPases have 2 components, CF(1) - the catalytic core - and CF(0) - the membrane proton channel. CF(1) has five subunits: alpha(3), beta(3), gamma(1), delta(1), epsilon(1). CF(0) has three main subunits: a(1), b(2) and c(9-12). The alpha and beta chains form an alternating ring which encloses part of the gamma chain. CF(1) is attached to CF(0) by a central stalk formed by the gamma and epsilon chains, while a peripheral stalk is formed by the delta and b chains.

It localises to the cell inner membrane. Its function is as follows. Key component of the proton channel; it plays a direct role in the translocation of protons across the membrane. The chain is ATP synthase subunit a from Coxiella burnetii (strain RSA 331 / Henzerling II).